An 89-amino-acid chain; its full sequence is Small ribosomal subunit protein uS15 (89 aa).

Residues 1–11 (MSIAAERKAEV) are compositionally biased toward basic and acidic residues. Residues 1–24 (MSIAAERKAEVIKTNATKAGDTGS) form a disordered region.

This sequence belongs to the universal ribosomal protein uS15 family. In terms of assembly, part of the 30S ribosomal subunit. Forms a bridge to the 50S subunit in the 70S ribosome, contacting the 23S rRNA.

One of the primary rRNA binding proteins, it binds directly to 16S rRNA where it helps nucleate assembly of the platform of the 30S subunit by binding and bridging several RNA helices of the 16S rRNA. In terms of biological role, forms an intersubunit bridge (bridge B4) with the 23S rRNA of the 50S subunit in the ribosome. This is Small ribosomal subunit protein uS15 from Bradyrhizobium diazoefficiens (strain JCM 10833 / BCRC 13528 / IAM 13628 / NBRC 14792 / USDA 110).